The chain runs to 104 residues: Large ribosomal subunit protein uL24 (104 aa).

It belongs to the universal ribosomal protein uL24 family. Part of the 50S ribosomal subunit.

In terms of biological role, one of two assembly initiator proteins, it binds directly to the 5'-end of the 23S rRNA, where it nucleates assembly of the 50S subunit. One of the proteins that surrounds the polypeptide exit tunnel on the outside of the subunit. The chain is Large ribosomal subunit protein uL24 from Corynebacterium aurimucosum (strain ATCC 700975 / DSM 44827 / CIP 107346 / CN-1) (Corynebacterium nigricans).